We begin with the raw amino-acid sequence, 325 residues long: Nod factor export ATP-binding protein I (325 aa).

The 231-residue stretch at 27-257 folds into the ABC transporter domain; the sequence is LELRKVRKQY…QIGCDVVEVY (231 aa). ATP is bound at residue 59 to 66; it reads GPNGAGKT.

It belongs to the ABC transporter superfamily. Lipooligosaccharide exporter (TC 3.A.1.102) family. The complex is composed of two ATP-binding proteins (NodI) and two transmembrane proteins (NodJ).

The protein resides in the cell inner membrane. In terms of biological role, part of the ABC transporter complex NodIJ involved in the export of the nodulation factors (Nod factors), the bacterial signal molecules that induce symbiosis and subsequent nodulation induction. Nod factors are LCO (lipo-chitin oligosaccharide), a modified beta-1,4-linked N-acetylglucosamine oligosaccharide. This subunit is responsible for energy coupling to the transport system. The protein is Nod factor export ATP-binding protein I of Cupriavidus pinatubonensis (strain JMP 134 / LMG 1197) (Cupriavidus necator (strain JMP 134)).